A 499-amino-acid chain; its full sequence is Anaerobic nitric oxide reductase flavorubredoxin (499 aa).

Residues 30–210 (TKGTSYNSYL…PFSALVTAKI (181 aa)) form a zinc metallo-hydrolase region. Fe cation contacts are provided by His79, Glu81, Asp83, His147, Asp166, and His227. Positions 254–393 (ITLFYDSMSN…LCREHGQFIA (140 aa)) constitute a Flavodoxin-like domain. FMN is bound by residues 260–264 (SMSNN) and 342–369 (AFGS…ETAV). Positions 447–498 (KQCMLCTVCNWVYDPEIGEPNQGVEPNTAWIDVPDYFLCPECNLGKDVFVEV) constitute a Rubredoxin-like domain. Fe cation contacts are provided by Cys452, Cys455, Cys485, and Cys488.

In the N-terminal section; belongs to the zinc metallo-hydrolase group 3 family. Homotetramer. It depends on Fe cation as a cofactor. Requires FMN as cofactor.

The protein resides in the cytoplasm. Its pathway is nitrogen metabolism; nitric oxide reduction. Its function is as follows. Anaerobic nitric oxide reductase; uses NADH to detoxify nitric oxide (NO), protecting several 4Fe-4S NO-sensitive enzymes. Has at least 2 reductase partners, only one of which (NorW, flavorubredoxin reductase) has been identified. NO probably binds to the di-iron center; electrons enter from the NorW at rubredoxin and are transferred sequentially to the FMN center and the di-iron center. Also able to function as an aerobic oxygen reductase. The sequence is that of Anaerobic nitric oxide reductase flavorubredoxin from Aliivibrio salmonicida (strain LFI1238) (Vibrio salmonicida (strain LFI1238)).